A 439-amino-acid polypeptide reads, in one-letter code: Histidinol dehydrogenase (439 aa).

Residues Tyr125, Gln187, and Asn210 each contribute to the NAD(+) site. Residues Thr233, Gln255, and His258 each coordinate substrate. The Zn(2+) site is built by Gln255 and His258. Catalysis depends on proton acceptor residues Glu323 and His324. Substrate-binding residues include His324, Asp357, Glu411, and His416. Asp357 is a binding site for Zn(2+). His416 contacts Zn(2+).

This sequence belongs to the histidinol dehydrogenase family. It depends on Zn(2+) as a cofactor.

The catalysed reaction is L-histidinol + 2 NAD(+) + H2O = L-histidine + 2 NADH + 3 H(+). Its pathway is amino-acid biosynthesis; L-histidine biosynthesis; L-histidine from 5-phospho-alpha-D-ribose 1-diphosphate: step 9/9. Functionally, catalyzes the sequential NAD-dependent oxidations of L-histidinol to L-histidinaldehyde and then to L-histidine. This chain is Histidinol dehydrogenase, found in Symbiobacterium thermophilum (strain DSM 24528 / JCM 14929 / IAM 14863 / T).